We begin with the raw amino-acid sequence, 391 residues long: Ferrochelatase (391 aa).

Residues histidine 196 and glutamate 281 each contribute to the Fe cation site.

This sequence belongs to the ferrochelatase family.

The protein localises to the cytoplasm. The enzyme catalyses heme b + 2 H(+) = protoporphyrin IX + Fe(2+). Its pathway is porphyrin-containing compound metabolism; protoheme biosynthesis; protoheme from protoporphyrin-IX: step 1/1. Functionally, catalyzes the ferrous insertion into protoporphyrin IX. The polypeptide is Ferrochelatase (Synechococcus sp. (strain CC9605)).